The sequence spans 213 residues: Agglutinin isolectin 2 (213 aa).

Residues 1–27 form the signal peptide; it reads MRKMMSTMALTLGAAVFLAFAAATAQA. Residue Gln-28 is modified to Pyrrolidone carboxylic acid. Chitin-binding type-1 domains follow at residues 28–69, 70–112, 113–155, and 156–198; these read QRCG…ACWT, SKRC…PCRA, DIKC…ACST, and DKPC…GCDA. Disulfide bonds link Cys-30–Cys-45, Cys-39–Cys-51, Cys-44–Cys-58, Cys-62–Cys-67, Cys-73–Cys-88, Cys-82–Cys-94, Cys-87–Cys-101, Cys-105–Cys-110, Cys-116–Cys-131, Cys-125–Cys-137, Cys-130–Cys-144, Cys-148–Cys-153, Cys-159–Cys-174, Cys-168–Cys-180, Cys-173–Cys-187, and Cys-191–Cys-196. 37–39 is a substrate binding site; sequence MEC. Position 89 to 100 (89 to 100) interacts with substrate; that stretch reads SQYGHCGFGAEY. 141–142 contributes to the substrate binding site; it reads SE. Positions 199–213 are excised as a propeptide; that stretch reads VFAGAITANSTLLAE.

As to quaternary structure, homodimer, u-shaped.

Functionally, N-acetyl-D-glucosamine / N-acetyl-D-neuraminic acid binding lectin. This Triticum aestivum (Wheat) protein is Agglutinin isolectin 2.